Reading from the N-terminus, the 552-residue chain is Non-structural protein NS1 (552 aa).

This sequence belongs to the orbivirus non-structural protein NS1 family.

The protein is Non-structural protein NS1 (Segment-5) of Antilocapra americana (Pronghorn).